The sequence spans 203 residues: Endo-type membrane-bound lytic murein transglycosylase A (203 aa).

The first 15 residues, 1 to 15 (MKLRWLMWLVVFLAG), serve as a signal peptide directing secretion. A lipid anchor (N-palmitoyl cysteine) is attached at C16. C16 is lipidated: S-diacylglycerol cysteine.

The protein belongs to the transglycosylase Slt family.

It is found in the cell outer membrane. The catalysed reaction is Endolytic cleavage of the (1-&gt;4)-beta-glycosidic linkage between N-acetylmuramic acid (MurNAc) and N-acetylglucosamine (GlcNAc) residues in peptidoglycan with concomitant formation of a 1,6-anhydrobond in the MurNAc residue.. In terms of biological role, murein-degrading enzyme. May play a role in recycling of muropeptides during cell elongation and/or cell division. Preferentially cleaves at a distance of more than two disaccharide units from the ends of the glycan chain. The sequence is that of Endo-type membrane-bound lytic murein transglycosylase A from Cronobacter sakazakii (strain ATCC BAA-894) (Enterobacter sakazakii).